Here is a 326-residue protein sequence, read N- to C-terminus: Transposase InsH for insertion sequence element IS5H (326 aa).

The protein belongs to the transposase 11 family.

Involved in the transposition of the insertion sequence IS5. The protein is Transposase InsH for insertion sequence element IS5H (insH6) of Escherichia coli (strain K12).